A 152-amino-acid polypeptide reads, in one-letter code: Protein SprT-like (152 aa).

A SprT-like domain is found at 7–148 (QRLVEEVSLQ…GKCKGKLILI (142 aa)). H67 is a binding site for Zn(2+). E68 is a catalytic residue. H71 is a binding site for Zn(2+).

Belongs to the SprT family. Requires Zn(2+) as cofactor.

The protein localises to the cytoplasm. This Bacillus cereus (strain ATCC 10987 / NRS 248) protein is Protein SprT-like.